The chain runs to 309 residues: Porphobilinogen deaminase (309 aa).

S-(dipyrrolylmethanemethyl)cysteine is present on C244.

It belongs to the HMBS family. Monomer. Requires dipyrromethane as cofactor.

The catalysed reaction is 4 porphobilinogen + H2O = hydroxymethylbilane + 4 NH4(+). Its pathway is porphyrin-containing compound metabolism; protoporphyrin-IX biosynthesis; coproporphyrinogen-III from 5-aminolevulinate: step 2/4. Functionally, tetrapolymerization of the monopyrrole PBG into the hydroxymethylbilane pre-uroporphyrinogen in several discrete steps. The chain is Porphobilinogen deaminase from Listeria monocytogenes serotype 4b (strain CLIP80459).